The primary structure comprises 483 residues: Aspartyl/glutamyl-tRNA(Asn/Gln) amidotransferase subunit B (483 aa).

The protein belongs to the GatB/GatE family. GatB subfamily. As to quaternary structure, heterotrimer of A, B and C subunits.

It catalyses the reaction L-glutamyl-tRNA(Gln) + L-glutamine + ATP + H2O = L-glutaminyl-tRNA(Gln) + L-glutamate + ADP + phosphate + H(+). It carries out the reaction L-aspartyl-tRNA(Asn) + L-glutamine + ATP + H2O = L-asparaginyl-tRNA(Asn) + L-glutamate + ADP + phosphate + 2 H(+). Allows the formation of correctly charged Asn-tRNA(Asn) or Gln-tRNA(Gln) through the transamidation of misacylated Asp-tRNA(Asn) or Glu-tRNA(Gln) in organisms which lack either or both of asparaginyl-tRNA or glutaminyl-tRNA synthetases. The reaction takes place in the presence of glutamine and ATP through an activated phospho-Asp-tRNA(Asn) or phospho-Glu-tRNA(Gln). This chain is Aspartyl/glutamyl-tRNA(Asn/Gln) amidotransferase subunit B, found in Anaplasma phagocytophilum (strain HZ).